A 325-amino-acid chain; its full sequence is Histone-lysine N-methyltransferase ATXR4 (325 aa).

Residues 1 to 30 (MSRLALNRYSRCFSRLKTLTTPLFFSSSAA) form the signal peptide. Residues 42 to 295 (PPIRVGLTES…EGEELRICYI (254 aa)) enclose the SET domain.

It belongs to the class V-like SAM-binding methyltransferase superfamily. Histone-lysine methyltransferase family. TRX/MLL subfamily.

It localises to the nucleus. The catalysed reaction is L-lysyl-[histone] + S-adenosyl-L-methionine = N(6)-methyl-L-lysyl-[histone] + S-adenosyl-L-homocysteine + H(+). In terms of biological role, histone methyltransferase. The protein is Histone-lysine N-methyltransferase ATXR4 (ATXR4) of Arabidopsis thaliana (Mouse-ear cress).